A 241-amino-acid polypeptide reads, in one-letter code: Xyloglucan-specific endo-beta-1,4-glucanase 1 (241 aa).

Positions 1–19 are cleaved as a signal peptide; it reads MKGFFAGVVAAATLAVASA. Residue Glu-136 is part of the active site. N-linked (GlcNAc...) asparagine glycans are attached at residues Asn-174 and Asn-190. Residue Glu-222 is part of the active site.

It belongs to the glycosyl hydrolase 12 (cellulase H) family. Interacts with host apoplastic glucanase inhibitor GIP1.

Its subcellular location is the secreted. The protein resides in the host. It catalyses the reaction xyloglucan + H2O = xyloglucan oligosaccharides.. The xyloglucanase activity is inhibited by the binding of the host apoplastic glucanase inhibitor GIP1. In terms of biological role, glycoside hydrolase that exhibits xyloglucanase activity. Acts as an important virulence factor during P.sojae infection but also acts as a pathogen-associated molecular pattern (PAMP) in soybean and solanaceous species, where it can trigger defense responses including cell death. XEG1-induced cell death can be suppressed by P.sojae RxLR effectors. The PAMP activity is independent of its xyloglucanase activity. XEG1 induces plant defense responses in a RLP kinase Serk3/Bak1-dependent manner in Nicotiana benthamiana. Moreover, the perception of XEG1 occurs independently of the perception of ethylene-inducing xylanase Eix2 in Tomato. With truncated paralog XLP1, is required to elevate apoplastic sugar during P.sojae infection. The chain is Xyloglucan-specific endo-beta-1,4-glucanase 1 from Phytophthora sojae (strain P6497) (Soybean stem and root rot agent).